The primary structure comprises 490 residues: Bifunctional NAD(P)H-hydrate repair enzyme Nnr (490 aa).

The 204-residue stretch at 1–204 folds into the YjeF N-terminal domain; it reads MKEIDELTIK…NIGHPVHLIN (204 aa). The tract at residues 1–204 is NAD(P)H-hydrate epimerase; that stretch reads MKEIDELTIK…NIGHPVHLIN (204 aa). The interval 51 to 55 is NADPHX 1; for epimerase activity; that stretch reads NNGGD. Asparagine 52 and aspartate 114 together coordinate K(+). The segment at 118-124 is NADPHX 1; for epimerase activity; that stretch reads GTGLRGE. Tyrosine 129 and aspartate 147 together coordinate (6S)-NADPHX. Serine 150 contacts K(+). The region spanning 212 to 488 is the YjeF C-terminal domain; the sequence is TREMVRSLLP…RLIPEAIRRL (277 aa). The interval 212 to 490 is ADP-dependent (S)-NAD(P)H-hydrate dehydratase; the sequence is TREMVRSLLP…IPEAIRRLKE (279 aa). Residue glycine 317 participates in (6S)-NADPHX binding. The interval 366–372 is NADPHX 2; for dehydratase activity; that stretch reads HPGEMAR. ADP-binding positions include 402–406 and 421–430; these read KSATT and NTGLSKGGSG. Aspartate 431 provides a ligand contact to (6S)-NADPHX.

The protein in the N-terminal section; belongs to the NnrE/AIBP family. This sequence in the C-terminal section; belongs to the NnrD/CARKD family. It depends on K(+) as a cofactor.

The enzyme catalyses (6S)-NADHX + ADP = AMP + phosphate + NADH + H(+). It carries out the reaction (6S)-NADPHX + ADP = AMP + phosphate + NADPH + H(+). The catalysed reaction is (6R)-NADHX = (6S)-NADHX. It catalyses the reaction (6R)-NADPHX = (6S)-NADPHX. In terms of biological role, bifunctional enzyme that catalyzes the epimerization of the S- and R-forms of NAD(P)HX and the dehydration of the S-form of NAD(P)HX at the expense of ADP, which is converted to AMP. This allows the repair of both epimers of NAD(P)HX, a damaged form of NAD(P)H that is a result of enzymatic or heat-dependent hydration. This chain is Bifunctional NAD(P)H-hydrate repair enzyme Nnr (nnr), found in Thermotoga maritima (strain ATCC 43589 / DSM 3109 / JCM 10099 / NBRC 100826 / MSB8).